The primary structure comprises 539 residues: Fusion glycoprotein F0 (539 aa).

The first 18 residues, 1 to 18 (MPTSILLIITTMIMASFC), serve as a signal peptide directing secretion. Residues 19-493 (QIDITKLQHV…IGNWHQSSTT (475 aa)) lie on the Extracellular side of the membrane. Residues Cys-63 and Cys-192 are joined by a disulfide bond. The tract at residues 110–134 (FFGGVIGTIALGVATSAQITAAVAL) is fusion peptide. The stretch at 135 to 163 (VEAKQARSDIEKLKEAIRDTNKAVQSVQS) forms a coiled coil. Residue Asn-238 is glycosylated (N-linked (GlcNAc...) asparagine; by host). Cystine bridges form between Cys-331-Cys-340, Cys-355-Cys-363, Cys-387-Cys-392, and Cys-394-Cys-417. A glycan (N-linked (GlcNAc...) asparagine; by host) is linked at Asn-359. Asn-446 carries an N-linked (GlcNAc...) asparagine; by host glycan. The stretch at 459-484 (ELNKAKSDLEESKEWIRRSNQKLDSI) forms a coiled coil. The chain crosses the membrane as a helical span at residues 494–514 (IIIVLIMIIILFIINVTIIII). At 515 to 539 (AVKYYRIQKRNRVDQNDKPYVLTNK) the chain is on the cytoplasmic side.

It belongs to the paramyxoviruses fusion glycoprotein family. As to quaternary structure, homotrimer of disulfide-linked F1-F2. Post-translationally, the inactive precursor F0 is glycosylated and proteolytically cleaved into F1 and F2 to be functionally active. The cleavage is mediated by cellular proteases during the transport and maturation of the polypeptide.

The protein localises to the virion membrane. It is found in the host cell membrane. Class I viral fusion protein. Under the current model, the protein has at least 3 conformational states: pre-fusion native state, pre-hairpin intermediate state, and post-fusion hairpin state. During viral and plasma cell membrane fusion, the heptad repeat (HR) regions assume a trimer-of-hairpins structure, positioning the fusion peptide in close proximity to the C-terminal region of the ectodomain. The formation of this structure appears to drive apposition and subsequent fusion of viral and plasma cell membranes. Directs fusion of viral and cellular membranes leading to delivery of the nucleocapsid into the cytoplasm. This fusion is pH independent and occurs directly at the outer cell membrane. The trimer of F1-F2 (F protein) probably interacts with HN at the virion surface. Upon HN binding to its cellular receptor, the hydrophobic fusion peptide is unmasked and interacts with the cellular membrane, inducing the fusion between cell and virion membranes. Later in infection, F proteins expressed at the plasma membrane of infected cells could mediate fusion with adjacent cells to form syncytia, a cytopathic effect that could lead to tissue necrosis. This is Fusion glycoprotein F0 (F) from Homo sapiens (Human).